A 940-amino-acid polypeptide reads, in one-letter code: Beta-mannosidase A (940 aa).

A signal peptide spans 1–21; sequence MHFHGIATQAVLASNITTGSG. Residues N15, N39, N79, N245, N314, N321, and N344 are each glycosylated (N-linked (GlcNAc...) asparagine). Residue E476 is the Proton donor of the active site. Residues N534, N605, N626, N653, N733, N761, and N785 are each glycosylated (N-linked (GlcNAc...) asparagine).

It belongs to the glycosyl hydrolase 2 family. Beta-mannosidase A subfamily. As to quaternary structure, homodimer.

It localises to the secreted. The enzyme catalyses Hydrolysis of terminal, non-reducing beta-D-mannose residues in beta-D-mannosides.. It participates in glycan metabolism; N-glycan degradation. Functionally, exoglycosidase that cleaves the single beta-linked mannose residue from the non-reducing end of beta-mannosidic oligosaccharides of various complexity and length. Involved in the degradation of polymeric mannan and galactomannan. This chain is Beta-mannosidase A (mndA), found in Emericella nidulans (strain FGSC A4 / ATCC 38163 / CBS 112.46 / NRRL 194 / M139) (Aspergillus nidulans).